We begin with the raw amino-acid sequence, 201 residues long: Orotate phosphoribosyltransferase (201 aa).

Residue glutamate 113–serine 121 participates in 5-phospho-alpha-D-ribose 1-diphosphate binding. Orotate contacts are provided by threonine 117 and arginine 145.

Belongs to the purine/pyrimidine phosphoribosyltransferase family. PyrE subfamily. Homodimer. It depends on Mg(2+) as a cofactor.

The catalysed reaction is orotidine 5'-phosphate + diphosphate = orotate + 5-phospho-alpha-D-ribose 1-diphosphate. The protein operates within pyrimidine metabolism; UMP biosynthesis via de novo pathway; UMP from orotate: step 1/2. Functionally, catalyzes the transfer of a ribosyl phosphate group from 5-phosphoribose 1-diphosphate to orotate, leading to the formation of orotidine monophosphate (OMP). The polypeptide is Orotate phosphoribosyltransferase (Helicobacter pylori (strain G27)).